The chain runs to 299 residues: tRNA dimethylallyltransferase (299 aa).

Residue 11–18 (GPTAVGKT) participates in ATP binding. 13–18 (TAVGKT) is a binding site for substrate. The interval 36–39 (DSQQ) is interaction with substrate tRNA.

This sequence belongs to the IPP transferase family. In terms of assembly, monomer. It depends on Mg(2+) as a cofactor.

The catalysed reaction is adenosine(37) in tRNA + dimethylallyl diphosphate = N(6)-dimethylallyladenosine(37) in tRNA + diphosphate. Functionally, catalyzes the transfer of a dimethylallyl group onto the adenine at position 37 in tRNAs that read codons beginning with uridine, leading to the formation of N6-(dimethylallyl)adenosine (i(6)A). This chain is tRNA dimethylallyltransferase, found in Streptococcus pyogenes serotype M18 (strain MGAS8232).